The primary structure comprises 29 residues: Chassatide C1 (29 aa).

The segment at residues 1–29 (GDACGETCFTGICFTAGCSCNPWPTCTRN) is a cross-link (cyclopeptide (Gly-Asn)). Intrachain disulfides connect Cys-4–Cys-18, Cys-8–Cys-20, and Cys-13–Cys-26.

This is a cyclic peptide. As to expression, expressed in leaf, fruit, pedical and stem but not in root (at protein level).

Its function is as follows. Probably participates in a plant defense mechanism. This Chassalia chartacea (Chassalia curviflora) protein is Chassatide C1.